The chain runs to 182 residues: Allergen Bla g 4 (182 aa).

Positions 1–12 are cleaved as a signal peptide; it reads AVLALCATDTLA. Asn72 is a glycosylation site (N-linked (GlcNAc...) asparagine).

It belongs to the calycin superfamily. Triabin family.

It is found in the secreted. Probable ligand-binding protein. The protein is Allergen Bla g 4 of Blattella germanica (German cockroach).